Here is a 332-residue protein sequence, read N- to C-terminus: Phenylalanine--tRNA ligase alpha subunit (332 aa).

Glu254 is a Mg(2+) binding site.

Belongs to the class-II aminoacyl-tRNA synthetase family. Phe-tRNA synthetase alpha subunit type 1 subfamily. Tetramer of two alpha and two beta subunits. Mg(2+) serves as cofactor.

It localises to the cytoplasm. The catalysed reaction is tRNA(Phe) + L-phenylalanine + ATP = L-phenylalanyl-tRNA(Phe) + AMP + diphosphate + H(+). The sequence is that of Phenylalanine--tRNA ligase alpha subunit from Hydrogenovibrio crunogenus (strain DSM 25203 / XCL-2) (Thiomicrospira crunogena).